The sequence spans 930 residues: Nonribosomal peptide synthetase acyN (930 aa).

Residues 15 to 436 (LDPQDNKISV…AGRAKETIIV (422 aa)) form an adenylation (A) domain region. The 80-residue stretch at 567-646 (APSNETEATI…GLAGTLETLM (80 aa)) folds into the Carrier domain. Ser-604 is modified (O-(pantetheine 4'-phosphoryl)serine). The tract at residues 665-914 (PLWLVHPGVG…HYTMLGPDNI (250 aa)) is thioesterase (TE) domain.

The protein belongs to the NRP synthetase family.

The enzyme catalyses 2 3-phenylpyruvate + 2 ATP = polyporic acid + 2 AMP + 2 diphosphate + H(+). The protein operates within secondary metabolite biosynthesis. With respect to regulation, hydroxyphenylpyruvate acts more like a competitive inhibitor rather than a substrate. Functionally, nonribosomal peptide synthetase that mediates the biosynthesis of polyporic acid via the condensation of 2 phenylpyruvate units. Polyporic acid is further hydroxylaed by the cytochrome P450 monooxygenase MO6277 into less toxic ascocorynin. The chain is Nonribosomal peptide synthetase acyN from Ascocoryne sarcoides (Purple jellydisc fungus).